The sequence spans 673 residues: UvrABC system protein B (673 aa).

Residues 30 to 417 (NSILLGNKYQ…SSVVVDQIIR (388 aa)) form the Helicase ATP-binding domain. Residue 43-50 (GVTGSGKT) coordinates ATP. A Beta-hairpin motif is present at residues 96–119 (YYDYYQPESYVPSKDLFIEKEATI). The region spanning 434–600 (QMEDLYSEIQ…TIVKKIQNIL (167 aa)) is the Helicase C-terminal domain. A UVR domain is found at 627 to 662 (KKLIDKLKFDLEEAVNDERFEDAIVLRDKIKELSSK).

The protein belongs to the UvrB family. In terms of assembly, forms a heterotetramer with UvrA during the search for lesions. Interacts with UvrC in an incision complex.

The protein localises to the cytoplasm. In terms of biological role, the UvrABC repair system catalyzes the recognition and processing of DNA lesions. A damage recognition complex composed of 2 UvrA and 2 UvrB subunits scans DNA for abnormalities. Upon binding of the UvrA(2)B(2) complex to a putative damaged site, the DNA wraps around one UvrB monomer. DNA wrap is dependent on ATP binding by UvrB and probably causes local melting of the DNA helix, facilitating insertion of UvrB beta-hairpin between the DNA strands. Then UvrB probes one DNA strand for the presence of a lesion. If a lesion is found the UvrA subunits dissociate and the UvrB-DNA preincision complex is formed. This complex is subsequently bound by UvrC and the second UvrB is released. If no lesion is found, the DNA wraps around the other UvrB subunit that will check the other stand for damage. The chain is UvrABC system protein B from Borreliella burgdorferi (strain ATCC 35210 / DSM 4680 / CIP 102532 / B31) (Borrelia burgdorferi).